We begin with the raw amino-acid sequence, 211 residues long: ATP phosphoribosyltransferase (211 aa).

The protein belongs to the ATP phosphoribosyltransferase family. Short subfamily. As to quaternary structure, heteromultimer composed of HisG and HisZ subunits.

It is found in the cytoplasm. It catalyses the reaction 1-(5-phospho-beta-D-ribosyl)-ATP + diphosphate = 5-phospho-alpha-D-ribose 1-diphosphate + ATP. It functions in the pathway amino-acid biosynthesis; L-histidine biosynthesis; L-histidine from 5-phospho-alpha-D-ribose 1-diphosphate: step 1/9. Its function is as follows. Catalyzes the condensation of ATP and 5-phosphoribose 1-diphosphate to form N'-(5'-phosphoribosyl)-ATP (PR-ATP). Has a crucial role in the pathway because the rate of histidine biosynthesis seems to be controlled primarily by regulation of HisG enzymatic activity. The chain is ATP phosphoribosyltransferase from Clostridium botulinum (strain 657 / Type Ba4).